We begin with the raw amino-acid sequence, 254 residues long: NAD-dependent protein deacylase (254 aa).

Residues 1-250 (MERLEEARKR…LPPSPEDQAE (250 aa)) form the Deacetylase sirtuin-type domain. 22 to 41 (GAGISKPSGIPTFRDAEGLW) provides a ligand contact to NAD(+). Substrate-binding residues include Y66 and R69. 104–107 (QNVD) is an NAD(+) binding site. H122 functions as the Proton acceptor in the catalytic mechanism. The Zn(2+) site is built by C130, C133, C149, and C152. NAD(+) contacts are provided by residues 189 to 191 (GTS), 215 to 217 (NPE), and A233.

This sequence belongs to the sirtuin family. Class III subfamily. Zn(2+) serves as cofactor.

It is found in the cytoplasm. The catalysed reaction is N(6)-acetyl-L-lysyl-[protein] + NAD(+) + H2O = 2''-O-acetyl-ADP-D-ribose + nicotinamide + L-lysyl-[protein]. The enzyme catalyses N(6)-succinyl-L-lysyl-[protein] + NAD(+) + H2O = 2''-O-succinyl-ADP-D-ribose + nicotinamide + L-lysyl-[protein]. Functionally, NAD-dependent lysine deacetylase and desuccinylase that specifically removes acetyl and succinyl groups on target proteins. Modulates the activities of several proteins which are inactive in their acylated form. In Thermus thermophilus (strain ATCC 27634 / DSM 579 / HB8), this protein is NAD-dependent protein deacylase.